Reading from the N-terminus, the 250-residue chain is Lectin 1 (250 aa).

Asparagine 119 carries N-linked (GlcNAc...) asparagine; partial glycosylation. The Mn(2+) site is built by glutamate 128 and aspartate 130. Ca(2+)-binding residues include aspartate 130, tyrosine 132, asparagine 138, and aspartate 141. The Mn(2+) site is built by aspartate 141 and histidine 146.

Belongs to the leguminous lectin family.

In terms of biological role, di-N-acetylchitobiose specific lectin. The chain is Lectin 1 from Laburnum alpinum (Scotch laburnum).